The following is a 156-amino-acid chain: Small ribosomal subunit protein uS7 (156 aa).

The protein belongs to the universal ribosomal protein uS7 family. Part of the 30S ribosomal subunit. Contacts proteins S9 and S11.

Its function is as follows. One of the primary rRNA binding proteins, it binds directly to 16S rRNA where it nucleates assembly of the head domain of the 30S subunit. Is located at the subunit interface close to the decoding center, probably blocks exit of the E-site tRNA. This Prochlorococcus marinus (strain SARG / CCMP1375 / SS120) protein is Small ribosomal subunit protein uS7.